Reading from the N-terminus, the 202-residue chain is Thymidine kinase (202 aa).

ATP-binding positions include Gly-16–Ser-23 and Asp-99–Gln-102. Glu-100 (proton acceptor) is an active-site residue. Zn(2+) is bound by residues Cys-156, Cys-159, Cys-194, and His-197.

The protein belongs to the thymidine kinase family. Homotetramer.

The protein resides in the cytoplasm. The enzyme catalyses thymidine + ATP = dTMP + ADP + H(+). This chain is Thymidine kinase, found in Deinococcus deserti (strain DSM 17065 / CIP 109153 / LMG 22923 / VCD115).